Consider the following 308-residue polypeptide: HTH-type transcriptional activator AllS (308 aa).

Residues 2 to 59 (FDPETLRTFIAVAETGSFSKAAERLCKTTATISYRIKLLEENTGVALFFRTTRSVTLT) enclose the HTH lysR-type domain. A DNA-binding region (H-T-H motif) is located at residues 19-38 (FSKAAERLCKTTATISYRIK).

The protein belongs to the LysR transcriptional regulatory family.

In terms of biological role, positive regulator essential for the expression of allD operon. Binds to the allD promoter. This Escherichia coli O6:K15:H31 (strain 536 / UPEC) protein is HTH-type transcriptional activator AllS (allS).